A 420-amino-acid chain; its full sequence is Disease resistance protein CHS1 (420 aa).

The region spanning 12-167 (RELDVFLSFS…QIADDIRLMF (156 aa)) is the TIR domain. Residue E86 is part of the active site. Residues 185 to 406 (MKALYALLAL…KDIKEVWKIM (222 aa)) form the NB-ARC domain.

As to expression, mostly expressed in leaves and flowers (mainly in sepals), and, at a lower intensity, in stems. Present at low levels in roots and seeds.

The protein resides in the cytoplasm. Its subcellular location is the nucleus. The enzyme catalyses NAD(+) + H2O = ADP-D-ribose + nicotinamide + H(+). Confers resistance to low temperatures by limiting chloroplast damage and cell death, thus maintaining growth homeostasis. Regulates steryl-esters and sterols accumulation. Limits leaf necrosis associated with virulent bacterial infection (e.g. Pseudomonas syringae pv. tomato DC3000). In Arabidopsis thaliana (Mouse-ear cress), this protein is Disease resistance protein CHS1.